The chain runs to 166 residues: HTH-type transcriptional regulator PecS (166 aa).

One can recognise an HTH marR-type domain in the interval 25 to 160; that stretch reads PMLVIGTLSR…LRALLGRVEK (136 aa).

It localises to the cytoplasm. The presence of PecM is required to ensure the full regulation of the pecS-pecM intergenic region by PecS. Functionally, negatively regulates the expression of genes encoding pectinase and cellulase, which play a major role in virulence, and the expression of the blue pigment indigoidine, which is implicated in pathogenicity and protection from oxidative stress. Represses the expression of genes involved in indigoidine biosynthesis by binding to indA and indC promoter regions. Also binds to promoter sites in the pecS-pecM intergenic region and negatively autoregulates its expression as well as that of pecM. The polypeptide is HTH-type transcriptional regulator PecS (Dickeya dadantii (strain 3937) (Erwinia chrysanthemi (strain 3937))).